The sequence spans 906 residues: Protein translocase subunit SecA (906 aa).

ATP is bound by residues Gln-86, 104–108 (GEGKT), and Asp-499. The interval 863-887 (PVVSRIDPKDRNPDDPTSWGRVSRN) is disordered. The Zn(2+) site is built by Cys-890, Cys-892, Cys-901, and His-902.

Belongs to the SecA family. Monomer and homodimer. Part of the essential Sec protein translocation apparatus which comprises SecA, SecYEG and auxiliary proteins SecDF-YajC and YidC. The cofactor is Zn(2+).

It is found in the cell inner membrane. The protein localises to the cytoplasm. The enzyme catalyses ATP + H2O + cellular proteinSide 1 = ADP + phosphate + cellular proteinSide 2.. Part of the Sec protein translocase complex. Interacts with the SecYEG preprotein conducting channel. Has a central role in coupling the hydrolysis of ATP to the transfer of proteins into and across the cell membrane, serving both as a receptor for the preprotein-SecB complex and as an ATP-driven molecular motor driving the stepwise translocation of polypeptide chains across the membrane. The chain is Protein translocase subunit SecA from Rickettsia rickettsii (strain Iowa).